The following is a 337-amino-acid chain: GTP 3',8-cyclase (337 aa).

The Radical SAM core domain occupies 17-243 (PFQRQYYYLR…HKSHTDGPAK (227 aa)). Position 26 (arginine 26) interacts with GTP. Residues cysteine 33 and cysteine 37 each coordinate [4Fe-4S] cluster. Tyrosine 39 provides a ligand contact to S-adenosyl-L-methionine. Cysteine 40 provides a ligand contact to [4Fe-4S] cluster. Arginine 76 provides a ligand contact to GTP. Glycine 80 is an S-adenosyl-L-methionine binding site. Position 107 (threonine 107) interacts with GTP. S-adenosyl-L-methionine is bound at residue serine 131. Lysine 168 serves as a coordination point for GTP. Methionine 202 is an S-adenosyl-L-methionine binding site. [4Fe-4S] cluster contacts are provided by cysteine 265 and cysteine 268. Position 270-272 (270-272 (RLR)) interacts with GTP. [4Fe-4S] cluster is bound at residue cysteine 282.

The protein belongs to the radical SAM superfamily. MoaA family. As to quaternary structure, monomer and homodimer. Requires [4Fe-4S] cluster as cofactor.

The enzyme catalyses GTP + AH2 + S-adenosyl-L-methionine = (8S)-3',8-cyclo-7,8-dihydroguanosine 5'-triphosphate + 5'-deoxyadenosine + L-methionine + A + H(+). It functions in the pathway cofactor biosynthesis; molybdopterin biosynthesis. Its function is as follows. Catalyzes the cyclization of GTP to (8S)-3',8-cyclo-7,8-dihydroguanosine 5'-triphosphate. The polypeptide is GTP 3',8-cyclase (Haemophilus influenzae (strain 86-028NP)).